We begin with the raw amino-acid sequence, 476 residues long: Inner membrane transporter YcaM (476 aa).

The Cytoplasmic portion of the chain corresponds to 1-9 (MAGNVQEKQ). Residues 10–30 (LRWYNIALMSFITVWGFGNVV) traverse the membrane as a helical segment. Residues 31 to 38 (NNYANQGL) are Periplasmic-facing. The helical transmembrane segment at 39–59 (VVVFSWVFIFALYFTPYALIV) threads the bilayer. Topologically, residues 60 to 80 (GQLGSTFKDGKGGVSTWIKHT) are cytoplasmic. A helical transmembrane segment spans residues 81–101 (MGPGLAYLAAWTYWVVHIPYL). At 102-125 (AQKPQAILIALGWAMKGDGSLIKE) the chain is on the periplasmic side. Residues 126-146 (YSVVALQGLTLVLFIFFMWVA) form a helical membrane-spanning segment. At 147–154 (SRGMKSLK) the chain is on the cytoplasmic side. Residues 155 to 175 (IVGSVAGIAMFVMSLLYVAMA) form a helical membrane-spanning segment. Topologically, residues 176–195 (VTAPAITEVHIATTNITWET) are periplasmic. The chain crosses the membrane as a helical span at residues 196 to 216 (FIPHIDFTYITTISMLVFAVG). Topologically, residues 217–240 (GAEKISPYVNQTRNPGKEFPKGML) are cytoplasmic. Residues 241–261 (CLAVMVAVCAILGSLAMGMMF) traverse the membrane as a helical segment. Over 262 to 291 (DSRNIPDDLMTNGQYYAFQKLGEYYNMGNT) the chain is Periplasmic. Residues 292-312 (LMVIYAIANTLGQVAALVFSI) traverse the membrane as a helical segment. Residues 313–343 (DAPLKVLLGDADSKYIPASLCRTNASGTPVN) are Cytoplasmic-facing. The chain crosses the membrane as a helical span at residues 344–364 (GYFLTLVLVAILIMLPTLGIG). Topologically, residues 365–375 (DMNNLYKWLLN) are periplasmic. The helical transmembrane segment at 376 to 396 (LNSVVMPLRYLWVFVAFIAVV) threads the bilayer. Over 397 to 414 (RLAQKYKPEYVFIRNKPL) the chain is Cytoplasmic. The chain crosses the membrane as a helical span at residues 415 to 435 (AMTVGIWCFAFTAFACLTGIF). Residues 436–448 (PKMEAFTAEWTFQ) are Periplasmic-facing. Residues 449–469 (LALNVATPFVLVGLGLIFPLL) traverse the membrane as a helical segment. Residues 470–476 (ARKANSK) lie on the Cytoplasmic side of the membrane.

The protein belongs to the amino acid-polyamine-organocation (APC) superfamily.

It localises to the cell inner membrane. The polypeptide is Inner membrane transporter YcaM (ycaM) (Escherichia coli (strain K12)).